The following is a 363-amino-acid chain: Trichocyst matrix protein T4-B (363 aa).

The signal sequence occupies residues 1 to 17 (MARSLTILAIVFAVATA). Residues 18–52 (RVTKSESPKEILAQVNKDSFGNSILSVLQLQLATG) constitute a propeptide that is removed on maturation. The stretch at 85 to 119 (VAFEKIIADLEQEIAYHQTQIVALSNLRDSTTEAL) forms a coiled coil. The propeptide occupies 190 to 221 (RFEKVQAKLMESKHALFKPLINALTQLASKVD). Residues 244 to 352 (ASLLATEERQ…EVLTQKLSAA (109 aa)) are a coiled coil.

It belongs to the TMP family. Two components are produced by post-translational processing from the precursor peptide.

The protein resides in the trichocyst. In terms of biological role, structural protein that crystallize inside the trichocyst matrix. The polypeptide is Trichocyst matrix protein T4-B (T4B) (Paramecium tetraurelia).